The chain runs to 512 residues: ATP synthase subunit alpha (512 aa).

169 to 176 (GDRQTGKT) serves as a coordination point for ATP.

Belongs to the ATPase alpha/beta chains family. As to quaternary structure, F-type ATPases have 2 components, CF(1) - the catalytic core - and CF(0) - the membrane proton channel. CF(1) has five subunits: alpha(3), beta(3), gamma(1), delta(1), epsilon(1). CF(0) has three main subunits: a(1), b(2) and c(9-12). The alpha and beta chains form an alternating ring which encloses part of the gamma chain. CF(1) is attached to CF(0) by a central stalk formed by the gamma and epsilon chains, while a peripheral stalk is formed by the delta and b chains.

Its subcellular location is the cell inner membrane. It catalyses the reaction ATP + H2O + 4 H(+)(in) = ADP + phosphate + 5 H(+)(out). Its function is as follows. Produces ATP from ADP in the presence of a proton gradient across the membrane. The alpha chain is a regulatory subunit. This Orientia tsutsugamushi (strain Ikeda) (Rickettsia tsutsugamushi) protein is ATP synthase subunit alpha.